We begin with the raw amino-acid sequence, 142 residues long: Transcription antitermination protein NusB (142 aa).

It belongs to the NusB family. Monomer or homodimer; in equilibrium, with a preference for the monomer. Dimerization may be employed to package NusB in an inactive form until recruitment into antitermination complexes.

Its function is as follows. Involved in transcription antitermination. Required for transcription of ribosomal RNA (rRNA) genes. Binds specifically to the boxA antiterminator sequence of the ribosomal RNA (rrn) operons. This is Transcription antitermination protein NusB from Thermotoga maritima (strain ATCC 43589 / DSM 3109 / JCM 10099 / NBRC 100826 / MSB8).